Here is a 350-residue protein sequence, read N- to C-terminus: Serine-threonine kinase receptor-associated protein (350 aa).

7 WD repeats span residues 12–56 (GHTR…GTFL), 57–96 (GHKG…ELMT), 98–137 (AHKH…AEPK), 141–179 (GHTS…EVKS), 180–212 (LNFN…HSAV), 221–262 (EAPA…ESYK), and 263–302 (GHFG…TYGL). A phosphoserine mark is found at serine 312, serine 335, and serine 338.

It belongs to the WD repeat STRAP family. As to quaternary structure, part of the core SMN complex that contains SMN1, GEMIN2/SIP1, DDX20/GEMIN3, GEMIN4, GEMIN5, GEMIN6, GEMIN7, GEMIN8 and STRAP/UNRIP. Part of the SMN-Sm complex that contains SMN1, GEMIN2/SIP1, DDX20/GEMIN3, GEMIN4, GEMIN5, GEMIN6, GEMIN7, GEMIN8, STRAP/UNRIP and the Sm proteins SNRPB, SNRPD1, SNRPD2, SNRPD3, SNRPE, SNRPF and SNRPG. Associates with the SMN complex in the cytoplasm but not in the nucleus. Interacts with GEMIN6; the interaction is direct. Interacts with GEMIN7; the interaction is direct. Interacts with CSDE1/UNR and MAWBP. Interacts with PDPK1. Interacts with TRIM48.

It is found in the cytoplasm. The protein localises to the nucleus. In terms of biological role, the SMN complex catalyzes the assembly of small nuclear ribonucleoproteins (snRNPs), the building blocks of the spliceosome, and thereby plays an important role in the splicing of cellular pre-mRNAs. Most spliceosomal snRNPs contain a common set of Sm proteins SNRPB, SNRPD1, SNRPD2, SNRPD3, SNRPE, SNRPF and SNRPG that assemble in a heptameric protein ring on the Sm site of the small nuclear RNA to form the core snRNP (Sm core). In the cytosol, the Sm proteins SNRPD1, SNRPD2, SNRPE, SNRPF and SNRPG are trapped in an inactive 6S pICln-Sm complex by the chaperone CLNS1A that controls the assembly of the core snRNP. To assemble core snRNPs, the SMN complex accepts the trapped 5Sm proteins from CLNS1A forming an intermediate. Binding of snRNA inside 5Sm triggers eviction of the SMN complex, thereby allowing binding of SNRPD3 and SNRPB to complete assembly of the core snRNP. STRAP plays a role in the cellular distribution of the SMN complex. Negatively regulates TGF-beta signaling but positively regulates the PDPK1 kinase activity by enhancing its autophosphorylation and by significantly reducing the association of PDPK1 with 14-3-3 protein. This Homo sapiens (Human) protein is Serine-threonine kinase receptor-associated protein (STRAP).